A 141-amino-acid polypeptide reads, in one-letter code: MAKKVVALIKLALQAGKANPAPPVGPALGQHGVNIMAFCKEYNSRTQDKAGFVIPVEISVFEDRSFSFITKTPPASVLITKAAGIAKGSGESAKGSAGSISTSQLEEIAKTKLPDLNCSSIESAMKVIEGTAKNMGVSIKD.

Belongs to the universal ribosomal protein uL11 family. As to quaternary structure, part of the ribosomal stalk of the 50S ribosomal subunit. Interacts with L10 and the large rRNA to form the base of the stalk. L10 forms an elongated spine to which L12 dimers bind in a sequential fashion forming a multimeric L10(L12)X complex. Post-translationally, one or more lysine residues are methylated.

Forms part of the ribosomal stalk which helps the ribosome interact with GTP-bound translation factors. The sequence is that of Large ribosomal subunit protein uL11 from Prochlorococcus marinus (strain NATL1A).